The following is a 159-amino-acid chain: Ribosomal RNA large subunit methyltransferase H (159 aa).

S-adenosyl-L-methionine-binding positions include Leu76, Gly108, and 127–132 (FSKMTL).

The protein belongs to the RNA methyltransferase RlmH family. In terms of assembly, homodimer.

The protein resides in the cytoplasm. It catalyses the reaction pseudouridine(1915) in 23S rRNA + S-adenosyl-L-methionine = N(3)-methylpseudouridine(1915) in 23S rRNA + S-adenosyl-L-homocysteine + H(+). In terms of biological role, specifically methylates the pseudouridine at position 1915 (m3Psi1915) in 23S rRNA. The sequence is that of Ribosomal RNA large subunit methyltransferase H from Bacillus cytotoxicus (strain DSM 22905 / CIP 110041 / 391-98 / NVH 391-98).